Reading from the N-terminus, the 483-residue chain is MAYVIGIDIGTSALKTLVVNKSGDVVESYSVSYNTAHPKSGYSEIDPEIWYEATLESLKYILNHYTHNDLTGISFSGQMHGLVVIDQEGNPIRPAILWNDTRTSQEVEDIKKNLGLNSLLQLTQNTVLEGFTLPKLMWLKNHEQDNYKRIYKFMLPKDYIVYKLTGNVYTEPSDAAGTIMFSVKDENWSTELLHRLNIDPSICPEIIASHQKSGQLTEKVKNTLGIDSNINVYQGGANNACGALGSGITDEQKQLVSIGTSGVALSIENSTDYENDGNVHYFNHCVPNQKYIMGVTLSAGYSLEWLKQLISADENFTTFLKDINQSEVGANGLMYTPYLLGERTPHNDASVRGSFIGLDANTTQLDMKRAVIEGITYSINESIHIMKNNAININEIVSIGGGAKNNQWLQIQADIFNTTITTRTEEQGPAYGAAMIAAMGEQWFNTFNEMSEAWIAYHQKVYPIETNTKSYQDLFNIYKTIYD.

Residue 79 to 80 coordinates substrate; the sequence is MH.

It belongs to the FGGY kinase family.

It catalyses the reaction D-xylulose + ATP = D-xylulose 5-phosphate + ADP + H(+). Its function is as follows. Catalyzes the phosphorylation of D-xylulose to D-xylulose 5-phosphate. The chain is Xylulose kinase from Staphylococcus xylosus.